A 206-amino-acid chain; its full sequence is Large ribosomal subunit protein uL4 (206 aa).

The segment at 63 to 93 is disordered; sequence MYKQKGTGRARHHSARAPQFRGGGKAHGPVV. Over residues 64–77 the composition is skewed to basic residues; it reads YKQKGTGRARHHSA.

Belongs to the universal ribosomal protein uL4 family. In terms of assembly, part of the 50S ribosomal subunit.

In terms of biological role, one of the primary rRNA binding proteins, this protein initially binds near the 5'-end of the 23S rRNA. It is important during the early stages of 50S assembly. It makes multiple contacts with different domains of the 23S rRNA in the assembled 50S subunit and ribosome. Forms part of the polypeptide exit tunnel. In Rhizobium meliloti (strain 1021) (Ensifer meliloti), this protein is Large ribosomal subunit protein uL4.